The sequence spans 878 residues: DNA mismatch repair protein MutS (878 aa).

An ATP-binding site is contributed by 629-636; sequence GPNMAGKS.

This sequence belongs to the DNA mismatch repair MutS family.

This protein is involved in the repair of mismatches in DNA. It is possible that it carries out the mismatch recognition step. This protein has a weak ATPase activity. The polypeptide is DNA mismatch repair protein MutS (Roseobacter denitrificans (strain ATCC 33942 / OCh 114) (Erythrobacter sp. (strain OCh 114))).